A 175-amino-acid chain; its full sequence is Epididymal-specific lipocalin-8 (175 aa).

Residues methionine 1–serine 22 form the signal peptide. N-linked (GlcNAc...) asparagine glycans are attached at residues asparagine 66 and asparagine 74. A disulfide bridge connects residues cysteine 79 and cysteine 166.

The protein belongs to the calycin superfamily. Lipocalin family. Predominantly expressed in epididymis.

The protein resides in the secreted. In terms of biological role, may play a role in male fertility. May act as a retinoid carrier protein within the epididymis. The chain is Epididymal-specific lipocalin-8 (Lcn8) from Mus musculus (Mouse).